A 571-amino-acid chain; its full sequence is Probable pectinesterase/pectinesterase inhibitor 58 (571 aa).

The N-terminal stretch at 1–28 is a signal peptide; sequence MGVDGELKKKKCIIAGVITALLVLMVVA. N-linked (GlcNAc...) asparagine glycans are attached at residues N36, N91, N207, and N216. The tract at residues 49–204 is pectinesterase inhibitor 58; sequence KTATTAVEAV…RELTSNGLAM (156 aa). The segment at 259-556 is pectinesterase 58; it reads NVVVAHDGSG…FTPARFLRGN (298 aa). T335 is a substrate binding site. A glycan (N-linked (GlcNAc...) asparagine) is linked at N347. Residue Q365 participates in substrate binding. Catalysis depends on D388, which acts as the Proton donor; for pectinesterase activity. A disulfide bond links C402 and C422. Residue D409 is the Nucleophile; for pectinesterase activity of the active site. Positions 477 and 479 each coordinate substrate.

It in the N-terminal section; belongs to the PMEI family. In the C-terminal section; belongs to the pectinesterase family. As to expression, expressed in siliques, but not in flower buds.

The protein resides in the secreted. It localises to the cell wall. The enzyme catalyses [(1-&gt;4)-alpha-D-galacturonosyl methyl ester](n) + n H2O = [(1-&gt;4)-alpha-D-galacturonosyl](n) + n methanol + n H(+). It participates in glycan metabolism; pectin degradation; 2-dehydro-3-deoxy-D-gluconate from pectin: step 1/5. Its function is as follows. Acts in the modification of cell walls via demethylesterification of cell wall pectin. This chain is Probable pectinesterase/pectinesterase inhibitor 58 (PME58), found in Arabidopsis thaliana (Mouse-ear cress).